Reading from the N-terminus, the 245-residue chain is 1-(5-phosphoribosyl)-5-[(5-phosphoribosylamino)methylideneamino] imidazole-4-carboxamide isomerase (245 aa).

Aspartate 8 functions as the Proton acceptor in the catalytic mechanism. Residue aspartate 130 is the Proton donor of the active site.

It belongs to the HisA/HisF family.

It localises to the cytoplasm. It catalyses the reaction 1-(5-phospho-beta-D-ribosyl)-5-[(5-phospho-beta-D-ribosylamino)methylideneamino]imidazole-4-carboxamide = 5-[(5-phospho-1-deoxy-D-ribulos-1-ylimino)methylamino]-1-(5-phospho-beta-D-ribosyl)imidazole-4-carboxamide. It participates in amino-acid biosynthesis; L-histidine biosynthesis; L-histidine from 5-phospho-alpha-D-ribose 1-diphosphate: step 4/9. The chain is 1-(5-phosphoribosyl)-5-[(5-phosphoribosylamino)methylideneamino] imidazole-4-carboxamide isomerase from Ectopseudomonas mendocina (strain ymp) (Pseudomonas mendocina).